A 358-amino-acid polypeptide reads, in one-letter code: DNA polymerase IV (358 aa).

Residues 4–185 (IIHIDMDCYF…LSLRKIPGVG (182 aa)) enclose the UmuC domain. Residues Asp-8 and Asp-103 each coordinate Mg(2+). Residue Glu-104 is part of the active site.

Belongs to the DNA polymerase type-Y family. As to quaternary structure, monomer. Requires Mg(2+) as cofactor.

Its subcellular location is the cytoplasm. It carries out the reaction DNA(n) + a 2'-deoxyribonucleoside 5'-triphosphate = DNA(n+1) + diphosphate. In terms of biological role, poorly processive, error-prone DNA polymerase involved in untargeted mutagenesis. Copies undamaged DNA at stalled replication forks, which arise in vivo from mismatched or misaligned primer ends. These misaligned primers can be extended by PolIV. Exhibits no 3'-5' exonuclease (proofreading) activity. May be involved in translesional synthesis, in conjunction with the beta clamp from PolIII. This Shewanella sp. (strain W3-18-1) protein is DNA polymerase IV.